Consider the following 836-residue polypeptide: MIPFLPMFSLLLLLIVNPINANNHYDKILAHSRIRGRDQGPNVCALQQILGTKKKYFSTCKNWYKKSICGQKTTVLYECCPGYMRMEGMKGCPAVLPIDHVYGTLGIVGATTTQRYSDASKLREEIEGKGSFTYFAPSNEAWDNLDSDIRRGLESNVNVELLNALHSHMINKRMLTKDLKNGMIIPSMYNNLGLFINHYPNGVVTVNCARIIHGNQIATNGVVHVIDRVLTQIGTSIQDFIEAEDDLSSFRAAAITSDILEALGRDGHFTLFAPTNEAFEKLPRGVLERIMGDKVASEALMKYHILNTLQCSESIMGGAVFETLEGNTIEIGCDGDSITVNGIKMVNKKDIVTNNGVIHLIDQVLIPDSAKQVIELAGKQQTTFTDLVAQLGLASALRPDGEYTLLAPVNNAFSDDTLSMDQRLLKLILQNHILKVKVGLNELYNGQILETIGGKQLRVFVYRTAVCIENSCMEKGSKQGRNGAIHIFREIIKPAEKSLHEKLKQDKRFSTFLSLLEAADLKELLTQPGDWTLFVPTNDAFKGMTSEEKEILIRDKNALQNIILYHLTPGVFIGKGFEPGVTNILKTTQGSKIFLKEVNDTLLVNELKSKESDIMTTNGVIHVVDKLLYPADTPVGNDQLLEILNKLIKYIQIKFVRGSTFKEIPVTVYTTKIITKVVEPKIKVIEGSLQPIIKTEGPTLTKVKIEGEPEFRLIKEGETITEVIHGEPIIKKYTKIIDGVPVEITEKETREERIITGPEIKYTRISTGGGETEETLKKLLQEEVTKVTKFIEGGDGHLFEDEEIKRLLQGDTPVRKLQANKKVQGSRRRLREGRSQ.

An N-terminal signal peptide occupies residues 1–21 (MIPFLPMFSLLLLLIVNPINA). The 55-residue stretch at 40–94 (GPNVCALQQILGTKKKYFSTCKNWYKKSICGQKTTVLYECCPGYMRMEGMKGCPA) folds into the EMI domain. 5 disulfide bridges follow: Cys44/Cys80, Cys69/Cys333, Cys79/Cys92, Cys208/Cys311, and Cys467/Cys472. Residue Cys60 is modified to S-cysteinyl cysteine. FAS1 domains are found at residues 97 to 230 (PIDH…DRVL), 234 to 365 (GTSI…DQVL), 368 to 492 (DSAK…REII), and 496 to 628 (EKSL…DKLL). An N-linked (GlcNAc...) asparagine glycan is attached at Asn599.

As to quaternary structure, homodimer. Interacts with BMP1 and fibronectin. Gamma-carboxylation is controversial. Gamma-carboxyglutamated; gamma-carboxyglutamate residues are formed by vitamin K dependent carboxylation; this may be required for calcium binding. According to a more recent report, does not contain vitamin K-dependent gamma-carboxyglutamate residues. In terms of tissue distribution, widely expressed with highest levels in aorta, stomach, lower gastrointestinal tract, placenta, uterus, thyroid tissue and breast. Expressed in the kidney. Expressed in the lung. Up-regulated in epithelial ovarian tumors. Not expressed in normal ovaries. Also highly expressed at the tumor periphery of lung carcinoma tissue but not within the tumor. Overexpressed in breast cancers.

The protein localises to the golgi apparatus. It is found in the secreted. Its subcellular location is the extracellular space. The protein resides in the extracellular matrix. Induces cell attachment and spreading and plays a role in cell adhesion. Enhances incorporation of BMP1 in the fibronectin matrix of connective tissues, and subsequent proteolytic activation of lysyl oxidase LOX. This Homo sapiens (Human) protein is Periostin (POSTN).